Consider the following 141-residue polypeptide: Mu-like prophage FluMu protein gp36 (141 aa).

To phage Mu protein gp36.

This is Mu-like prophage FluMu protein gp36 from Haemophilus influenzae (strain ATCC 51907 / DSM 11121 / KW20 / Rd).